Reading from the N-terminus, the 294-residue chain is Ribosomal RNA small subunit methyltransferase A (294 aa).

Residues Asn-29, Val-31, Gly-56, Glu-77, Asp-107, and Asn-126 each coordinate S-adenosyl-L-methionine.

This sequence belongs to the class I-like SAM-binding methyltransferase superfamily. rRNA adenine N(6)-methyltransferase family. RsmA subfamily.

Its subcellular location is the cytoplasm. The enzyme catalyses adenosine(1518)/adenosine(1519) in 16S rRNA + 4 S-adenosyl-L-methionine = N(6)-dimethyladenosine(1518)/N(6)-dimethyladenosine(1519) in 16S rRNA + 4 S-adenosyl-L-homocysteine + 4 H(+). Specifically dimethylates two adjacent adenosines (A1518 and A1519) in the loop of a conserved hairpin near the 3'-end of 16S rRNA in the 30S particle. May play a critical role in biogenesis of 30S subunits. The polypeptide is Ribosomal RNA small subunit methyltransferase A (Mycobacterium sp. (strain MCS)).